The sequence spans 221 residues: Translation initiation factor 6 (221 aa).

This sequence belongs to the eIF-6 family.

Its function is as follows. Binds to the 50S ribosomal subunit and prevents its association with the 30S ribosomal subunit to form the 70S initiation complex. This chain is Translation initiation factor 6, found in Methanospirillum hungatei JF-1 (strain ATCC 27890 / DSM 864 / NBRC 100397 / JF-1).